Here is a 106-residue protein sequence, read N- to C-terminus: UPF0145 protein CKL_2433 (106 aa).

It belongs to the UPF0145 family.

The protein is UPF0145 protein CKL_2433 of Clostridium kluyveri (strain ATCC 8527 / DSM 555 / NBRC 12016 / NCIMB 10680 / K1).